We begin with the raw amino-acid sequence, 224 residues long: 4'-phosphopantetheinyl transferase Sfp (224 aa).

Mg(2+)-binding residues include aspartate 107, glutamate 109, and glutamate 151. The segment at 158–189 (GKGLSLPLDSFSVRLHQDGQVSIELPDSHSPC) is peptidyl carrier protein binding.

This sequence belongs to the P-Pant transferase superfamily. Gsp/Sfp/HetI/AcpT family. Monomer in solution. It depends on Mg(2+) as a cofactor.

The enzyme catalyses apo-[ACP] + CoA = holo-[ACP] + adenosine 3',5'-bisphosphate + H(+). In terms of biological role, activates the seven peptidyl carrier protein (PCP) domains of the first three subunits (SrfAA, SrfAB and SrfAC) of surfactin synthetase by transferring the 4'-phosphopantetheinyl moiety of coenzyme A (CoA) to a serine residue. Required for cells of B.subtilis to become producers of the lipopeptide antibiotics surfactin and plipastatin B1. The chain is 4'-phosphopantetheinyl transferase Sfp (sfp) from Bacillus subtilis (strain 168).